We begin with the raw amino-acid sequence, 382 residues long: Manganese peroxidase H4 (382 aa).

A signal peptide spans 1–24 (MAFGSLLAFVALAAITRAAPTAES). Disulfide bonds link Cys-27/Cys-39, Cys-38/Cys-313, Cys-57/Cys-141, Cys-277/Cys-344, and Cys-366/Cys-373. Residues Glu-59 and Glu-63 each contribute to the Mn(2+) site. His-70 (proton acceptor) is an active-site residue. Ca(2+) contacts are provided by Asp-71, Gly-86, Asp-88, and Ser-90. 2 N-linked (GlcNAc...) asparagine glycosylation sites follow: Asn-100 and Asn-155. Heme b is bound at residue His-197. Thr-198 is a binding site for Ca(2+). Asp-203 is a Mn(2+) binding site. Residues Asp-215, Thr-217, Thr-220, and Asp-222 each coordinate Ca(2+). Residue Asn-241 is glycosylated (N-linked (GlcNAc...) asparagine).

Belongs to the peroxidase family. Ligninase subfamily. Heme b is required as a cofactor. Ca(2+) serves as cofactor.

It localises to the secreted. It catalyses the reaction 2 Mn(2+) + H2O2 + 2 H(+) = 2 Mn(3+) + 2 H2O. In terms of biological role, catalyzes the oxidation of Mn(2+) to Mn(3+). The latter, acting as a diffusible redox mediator, is capable of oxidizing a variety of lignin compounds. In Phanerodontia chrysosporium (White-rot fungus), this protein is Manganese peroxidase H4.